The chain runs to 102 residues: NADH-quinone oxidoreductase subunit K (102 aa).

A run of 3 helical transmembrane segments spans residues Leu5–Leu25, Ile31–Phe51, and Leu65–Phe85.

Belongs to the complex I subunit 4L family. As to quaternary structure, NDH-1 is composed of 14 different subunits. Subunits NuoA, H, J, K, L, M, N constitute the membrane sector of the complex.

It is found in the cell inner membrane. The enzyme catalyses a quinone + NADH + 5 H(+)(in) = a quinol + NAD(+) + 4 H(+)(out). In terms of biological role, NDH-1 shuttles electrons from NADH, via FMN and iron-sulfur (Fe-S) centers, to quinones in the respiratory chain. The immediate electron acceptor for the enzyme in this species is believed to be ubiquinone. Couples the redox reaction to proton translocation (for every two electrons transferred, four hydrogen ions are translocated across the cytoplasmic membrane), and thus conserves the redox energy in a proton gradient. This is NADH-quinone oxidoreductase subunit K from Agrobacterium fabrum (strain C58 / ATCC 33970) (Agrobacterium tumefaciens (strain C58)).